Consider the following 437-residue polypeptide: Probable carboxypeptidase HCBG_00059 (437 aa).

The first 20 residues, 1–20 (MKLSNLAALLSASTVAPVAA), serve as a signal peptide directing secretion. Asn153 is a glycosylation site (N-linked (GlcNAc...) asparagine). Asp163 provides a ligand contact to Zn(2+). Glu195 functions as the Proton acceptor in the catalytic mechanism. Glu196 lines the Zn(2+) pocket. A glycan (N-linked (GlcNAc...) asparagine) is linked at Asn346.

The protein belongs to the peptidase M20A family. Zn(2+) is required as a cofactor.

The protein resides in the secreted. This chain is Probable carboxypeptidase HCBG_00059, found in Ajellomyces capsulatus (strain G186AR / H82 / ATCC MYA-2454 / RMSCC 2432) (Darling's disease fungus).